Reading from the N-terminus, the 299-residue chain is Mitochondrial 2-oxodicarboxylate carrier (299 aa).

Solcar repeat units follow at residues 11–100 (NEAS…YKKL), 107–196 (SPAL…VKNI), and 205–294 (LEFL…TYSW). 6 helical membrane-spanning segments follow: residues 17–37 (ILAG…LDVV), 62–82 (MIFR…PILA), 100–120 (LLGY…LGSG), 179–199 (HGVF…IIPV), 211–231 (FGIG…FDVA), and 274–290 (IMRL…VYEY).

This sequence belongs to the mitochondrial carrier (TC 2.A.29) family.

Its subcellular location is the mitochondrion inner membrane. It carries out the reaction 2-oxoadipate(in) + 2-oxoglutarate(out) = 2-oxoadipate(out) + 2-oxoglutarate(in). The catalysed reaction is hexanedioate(in) + 2-oxoglutarate(out) = hexanedioate(out) + 2-oxoglutarate(in). It catalyses the reaction L-2-aminoadipate(in) + 2-oxoglutarate(out) = L-2-aminoadipate(out) + 2-oxoglutarate(in). The enzyme catalyses glutarate(in) + 2-oxoglutarate(out) = glutarate(out) + 2-oxoglutarate(in). It carries out the reaction 2-oxoheptanedioate(in) + 2-oxoglutarate(out) = 2-oxoheptanedioate(out) + 2-oxoglutarate(in). The catalysed reaction is heptanedioate(in) + 2-oxoglutarate(out) = heptanedioate(out) + 2-oxoglutarate(in). It catalyses the reaction citrate(in) + 2-oxoglutarate(out) = citrate(out) + 2-oxoglutarate(in). Transports dicarboxylates across the inner membranes of mitochondria by a counter-exchange mechanism. Can transport 2-oxoadipate (2-oxohexanedioate), 2-oxoglutarate, adipate (hexanedioate), glutarate, and to a lesser extent, pimelate (heptanedioate), 2-oxopimelate (2-oxoheptanedioate), 2-aminoadipate (2-aminohexanedioate), oxaloacetate, and citrate. Plays a central role in catabolism of lysine, hydroxylysine, and tryptophan, by transporting common metabolite intermediates (such as 2-oxoadipate) into the mitochondria, where it is converted into acetyl-CoA and can enter the citric acid (TCA) cycle. The chain is Mitochondrial 2-oxodicarboxylate carrier (SLC25A21) from Bos taurus (Bovine).